The following is a 116-amino-acid chain: Thioredoxin (116 aa).

Positions threonine 2–proline 113 constitute a Thioredoxin domain. An intrachain disulfide couples cysteine 37 to cysteine 40.

Belongs to the thioredoxin family.

Functionally, participates in various redox reactions through the reversible oxidation of its active center dithiol to a disulfide and catalyzes dithiol-disulfide exchange reactions. The protein is Thioredoxin (trxA) of Mycobacterium bovis (strain ATCC BAA-935 / AF2122/97).